The chain runs to 310 residues: ADP-L-glycero-D-manno-heptose-6-epimerase (310 aa).

NADP(+) contacts are provided by residues 10 to 11 (FI), 31 to 32 (DN), K38, K53, 75 to 79 (EGACS), and N92. Y140 acts as the Proton acceptor in catalysis. K144 contacts NADP(+). Position 169 (N169) interacts with substrate. Residues V170 and K178 each coordinate NADP(+). Catalysis depends on K178, which acts as the Proton acceptor. Residues S180, H187, 201-204 (FEGS), R209, and Y272 contribute to the substrate site.

It belongs to the NAD(P)-dependent epimerase/dehydratase family. HldD subfamily. Homopentamer. Requires NADP(+) as cofactor.

It carries out the reaction ADP-D-glycero-beta-D-manno-heptose = ADP-L-glycero-beta-D-manno-heptose. The protein operates within nucleotide-sugar biosynthesis; ADP-L-glycero-beta-D-manno-heptose biosynthesis; ADP-L-glycero-beta-D-manno-heptose from D-glycero-beta-D-manno-heptose 7-phosphate: step 4/4. Functionally, catalyzes the interconversion between ADP-D-glycero-beta-D-manno-heptose and ADP-L-glycero-beta-D-manno-heptose via an epimerization at carbon 6 of the heptose. This is ADP-L-glycero-D-manno-heptose-6-epimerase from Klebsiella pneumoniae subsp. pneumoniae (strain ATCC 700721 / MGH 78578).